A 328-amino-acid polypeptide reads, in one-letter code: ATP-dependent 6-phosphofructokinase (328 aa).

Gly-11 contributes to the ATP binding site. 21-25 (RAAVR) is an ADP binding site. Residues 72–73 (RS) and 102–105 (GNGT) each bind ATP. Asn-103 serves as a coordination point for Mg(2+). A substrate-binding site is contributed by 126 to 128 (TID). Asp-128 serves as the catalytic Proton acceptor. Residue Arg-155 participates in ADP binding. Substrate contacts are provided by residues Arg-163 and 170 to 172 (MGR). ADP contacts are provided by residues 186 to 188 (GAE) and 214 to 216 (KAS). Residues Glu-223, Arg-247, and 253–256 (HVQR) contribute to the substrate site.

This sequence belongs to the phosphofructokinase type A (PFKA) family. ATP-dependent PFK group I subfamily. Prokaryotic clade 'B1' sub-subfamily. Homotetramer. Requires Mg(2+) as cofactor.

The protein resides in the cytoplasm. The catalysed reaction is beta-D-fructose 6-phosphate + ATP = beta-D-fructose 1,6-bisphosphate + ADP + H(+). The protein operates within carbohydrate degradation; glycolysis; D-glyceraldehyde 3-phosphate and glycerone phosphate from D-glucose: step 3/4. With respect to regulation, allosterically activated by ADP and other diphosphonucleosides, and allosterically inhibited by phosphoenolpyruvate. Catalyzes the phosphorylation of D-fructose 6-phosphate to fructose 1,6-bisphosphate by ATP, the first committing step of glycolysis. This Cytophaga hutchinsonii (strain ATCC 33406 / DSM 1761 / CIP 103989 / NBRC 15051 / NCIMB 9469 / D465) protein is ATP-dependent 6-phosphofructokinase.